The chain runs to 200 residues: Probable molybdenum cofactor guanylyltransferase (200 aa).

Residues 9-11 (LAG), lysine 21, aspartate 69, and aspartate 100 each bind GTP. Aspartate 100 lines the Mg(2+) pocket.

The protein belongs to the MobA family. Mg(2+) is required as a cofactor.

It is found in the cytoplasm. The catalysed reaction is Mo-molybdopterin + GTP + H(+) = Mo-molybdopterin guanine dinucleotide + diphosphate. In terms of biological role, transfers a GMP moiety from GTP to Mo-molybdopterin (Mo-MPT) cofactor (Moco or molybdenum cofactor) to form Mo-molybdopterin guanine dinucleotide (Mo-MGD) cofactor. The polypeptide is Probable molybdenum cofactor guanylyltransferase (Bacillus thuringiensis (strain Al Hakam)).